We begin with the raw amino-acid sequence, 405 residues long: Growth/differentiation factor 11 (405 aa).

A signal peptide spans 1–24 (MVLAAPLLLGFLLLALELRPRGEA). The propeptide occupies 25–296 (AEGPAAAAAA…VLENTKRSRR (272 aa)). N-linked (GlcNAc...) asparagine glycosylation occurs at asparagine 92. Disulfide bonds link cysteine 302/cysteine 312, cysteine 311/cysteine 370, cysteine 339/cysteine 402, and cysteine 343/cysteine 404.

Belongs to the TGF-beta family. Homodimer; disulfide-linked. Interacts directly with ACVR2B. Interacts directly with ACVR2A. Interacts with ACVR1B, TGFBR1 and ACVR1C in an ACVR2B-dependent manner. Interacts with FST isoform 2/FS288. Post-translationally, synthesized as large precursor molecule that undergoes proteolytic cleavage by furin-like proteases. This produces an inactive form consisting of the mature C-terminal portion non-covalently bound to its cleaved N-terminal propeptide. Activation of the mature form requires additional cleavage of the propeptide by a tolloid-like metalloproteinase.

It localises to the secreted. Functionally, secreted signal that acts globally to regulate anterior/posterior axial patterning during development. May play critical roles in patterning both mesodermal and neural tissues. It is required for proper vertebral patterning and orofacial development. Signals through activin receptors type-2, ACVR2A and ACVR2B, and activin receptors type-1, ACVR1B, ACVR1C and TGFBR1 leading to the phosphorylation of SMAD2 and SMAD3. The polypeptide is Growth/differentiation factor 11 (Gdf11) (Rattus norvegicus (Rat)).